The following is a 1021-amino-acid chain: MNLDLGSTVRGYESDKDTFPQSKGVSSSQKEQHSQLNQTKIAYEQRLLNDLEDMDDPLDLFLDYMIWISTSYIEVDSESGQEVLRSTMERCLIYIQDMETYRNDPRFLKIWIWYINLFLSNNFHESENTFKYMFNKGIGTKLSLFYEEFSKLLENAQFFLEAKVLLELGAENNCRPYNRLLRSLSNYEDRLREMNIVENQNSVPDSRERLKGRLIYRTAPFFIRKFLTSSLMTDDKENRANLNSNVGVGKSAPNVYQDSIVVADFKSETERLNLNSSKQPSNQRLKNGNKKTSIYADQKQSNNPVYKLINTPGRKPERIVFNFNLIYPENDEEFNTEEILAMIKGLYKVQRRGKKHTEDYTSDKNRKKRKLDVLVERRQDLPSSQPPVVPKSTRIEVFKDDDNPSQSTHHKNTQVQVQTTTSILPLKPVVDGNLAHETPVKPSLTSNASRSPTVTAFSKDAINEVFSMFNQHYSTPGALLDGDDTTTSKFNVFENFTQEFTAKNIEDLTEVKDPKQETVSQQTTSTNETNDRYERLSNSSTRPEKADYMTPIKETTETDVVPIIQTPKEQIRTEDKKSGDNTETQTQLTSTTIQSSPFLTQPEPQAEKLLQTAEHSEKSKEHYPTIIPPFTKIKNQPPVIIENPLSNNLRAKFLSEISPPLFQYNTFYNYNQELKMSSLLKKIHRVSRNENKNPIVDFKKTGDLYCIRGELGEGGYATVYLAESSQGHLRALKVEKPASVWEYYIMSQVEFRLRKSTILKSIINASALHLFLDESYLVLNYASQGTVLDLINLQREKAIDGNGIMDEYLCMFITVELMKVLEKIHEVGIIHGDLKPDNCMIRLEKPGEPLGAHYMRNGEDGWENKGIYLIDFGRSFDMTLLPPGTKFKSNWKADQQDCWEMRAGKPWSYEADYYGLAGVIHSMLFGKFIETIQLQNGRCKLKNPFKRYWKKEIWGVIFDLLLNSGQASNQALPMTEKIVEIRNLIESHLEQHAENHLRNVILSIEEELSHFQYKGKPSRRF.

The interval 1-35 (MNLDLGSTVRGYESDKDTFPQSKGVSSSQKEQHSQ) is disordered. A compositionally biased stretch (polar residues) spans 19–35 (FPQSKGVSSSQKEQHSQ). The region spanning 47-212 (LLNDLEDMDD…VPDSRERLKG (166 aa)) is the BUB1 N-terminal domain. The interval 289–359 (NKKTSIYADQ…QRRGKKHTED (71 aa)) is interaction with BUB3. 4 disordered regions span residues 351–370 (RRGK…KKRK), 398–420 (FKDD…VQTT), 511–545 (VKDP…RPEK), and 567–600 (PKEQ…PFLT). Residues 517–528 (ETVSQQTTSTNE) are compositionally biased toward polar residues. Residues 569–580 (EQIRTEDKKSGD) are compositionally biased toward basic and acidic residues. Low complexity predominate over residues 582-596 (TETQTQLTSTTIQSS). A Protein kinase domain is found at 705–1021 (YCIRGELGEG…QYKGKPSRRF (317 aa)). 3 residues coordinate ATP: glycine 715, tyrosine 716, and alanine 717. The active-site Proton acceptor is the aspartate 833. ATP-binding residues include aspartate 837, asparagine 838, and aspartate 871.

This sequence belongs to the protein kinase superfamily. Ser/Thr protein kinase family. BUB1 subfamily. Part of complex consisting of MAD1, BUB1 and BUB3 after activation of spindle checkpoint. Part of the BUB1-BUB3 complex, composed of BUB1 and BUB3. Interacts with SPC105 (via phosphorylated MELT motifs); the interaction occurs when part of the BUB1-BUB3 complex. Interacts with SKP1; the interaction is direct. It depends on Mg(2+) as a cofactor. Post-translationally, autophosphorylated.

Its subcellular location is the nucleus. The protein resides in the chromosome. The protein localises to the centromere. It is found in the kinetochore. It carries out the reaction L-seryl-[protein] + ATP = O-phospho-L-seryl-[protein] + ADP + H(+). The catalysed reaction is L-threonyl-[protein] + ATP = O-phospho-L-threonyl-[protein] + ADP + H(+). Functionally, involved in mitotic spindle assembly checkpoint signaling, a process that delays anaphase until chromosomes are bioriented on the spindle, and in the repair of incorrect mitotic kinetochore-spindle microtubule attachments. The formation of a MAD1-BUB1-BUB3 complex seems to be required for the spindle checkpoint mechanism. Phosphorylates BUB3. Also autophosphorylates. Associates with centromere (CEN) DNA via interaction with SKP1. The association with SKP1 is required for the mitotic delay induced by kinetochore tension defects, but not for the arrest induced by spindle depolymerization or kinetochore assembly defects. In Saccharomyces cerevisiae (strain ATCC 204508 / S288c) (Baker's yeast), this protein is Spindle assembly checkpoint serine/threonine-protein kinase BUB1 (BUB1).